A 219-amino-acid chain; its full sequence is Thiopurine S-methyltransferase (219 aa).

Residues W10, L45, E66, and R130 each coordinate S-adenosyl-L-methionine.

It belongs to the class I-like SAM-binding methyltransferase superfamily. TPMT family.

Its subcellular location is the cytoplasm. The enzyme catalyses S-adenosyl-L-methionine + a thiopurine = S-adenosyl-L-homocysteine + a thiopurine S-methylether.. In Psychrobacter cryohalolentis (strain ATCC BAA-1226 / DSM 17306 / VKM B-2378 / K5), this protein is Thiopurine S-methyltransferase.